The following is a 1036-amino-acid chain: Histidine kinase 3 (1036 aa).

Residues 1 to 8 lie on the Extracellular side of the membrane; the sequence is MSLFHVLG. The chain crosses the membrane as a helical span at residues 9 to 29; the sequence is FGVKIGHLFWMLCCWFVSWFV. Over 30-94 the chain is Cytoplasmic; that stretch reads DNGIEDKSGL…VKFNKAWWRK (65 aa). A helical transmembrane segment spans residues 95-115; the sequence is LVVVWVVFWVLVSIWTFWYFS. The Extracellular segment spans residues 116–399; that stretch reads SQAMEKRKET…CRFKQKPPWP (284 aa). Positions 163–389 constitute a CHASE domain; that stretch reads IPSAIDQRTF…GDPLRKHEMR (227 aa). A helical transmembrane segment spans residues 400–420; it reads VLSMVTSFGILVIALLVAHII. Over 421–1036 the chain is Cytoplasmic; that stretch reads HATVSRIHKV…FFNSPSDTES (616 aa). A Histidine kinase domain is found at 457–723; that stretch reads TVSHEIRTPM…TFTFTAVFSN (267 aa). At H460 the chain carries Phosphohistidine; by autocatalysis. 2 Response regulatory domains span residues 746–865 and 891–1028; these read KAVV…QRGL and KILI…SRFF. 4-aspartylphosphate is present on D941.

In terms of assembly, interacts with AHK2, AHK4, AHP1, AHP2, AHP3, AHP5 and At5g43560. In terms of processing, autophosphorylated predominantly on His residues. Activation probably requires a transfer of a phosphate group between a His in the transmitter domain and an Asp of the receiver domain. Mostly expressed in leaves and flowers, and, to a lower extent, in roots, stems, and siliques, especially in the vascular tissues. Present in seedlings.

The protein resides in the cell membrane. The protein localises to the endoplasmic reticulum membrane. The catalysed reaction is ATP + protein L-histidine = ADP + protein N-phospho-L-histidine.. With respect to regulation, activated by cytokinins to initiate phosphorelay signaling. This cytokinin-mediated activation is repressed by the trans-zeatin antagonists 6-(2-hydroxy-3-methylbenzylamino)purine (PI-55) and 6-(2,5-Dihydroxybenzylamino)purine (LGR-991). Functionally, cytokinins (CK) receptor related to bacterial two-component regulators. Functions as a histidine kinase and transmits the stress signal to a downstream MAPK cascade. This protein undergoes an ATP-dependent autophosphorylation at a conserved histidine residue in the kinase core, and a phosphoryl group is then transferred to a conserved aspartate residue in the receiver domain. In the presence of cytokinin, feeds phosphate to phosphorelay-integrating histidine phosphotransfer protein (HPt) and activates subsequent cascade. Involved in meristems establishment in seedlings. Redundant negative regulator of drought and salt stress responses and abscisic acid (ABA) signaling. Together with AHK2, plays a negative regulatory role in cold stress signaling via inhibition of ABA response, occurring independently of the cold acclimation pathway. Redundant positive regulator of cytokinin signaling that regulates many developmental processes including seed germination, cell division, seed size, chlorophyll retention during leaf senescence, root repression and shoot promotion. Can interact with isoprenoid-type cytokinins trans-zeatin (tZ and tZR), cis-zeatin (cZ), dihydrozeatin (DZ), buta-2,3-dienyladenine (HA-8), penta-2,3-dienyladenine (HA-1), 4-methyl-penta-2,3-dienyladenine (HA-10), 4-hydroxy-2-butynyladenine (RM1), 2-propynyladenine (RM3), 2-butynyladenine (RM6), and cytokinin ribosides and ribotides. Together with AHK4, involved in the cytokinin-dependent responses to Pi starvation and sucrose stresses. Promotes cytokinin-mediated leaf longevity through a specific phosphorylation of the response regulator ARR2. Involved in alkamides (e.g. N-isobutyl decanamide) and N-acylethanolamides (NAE) signaling that control meristematic activity and differentiation processes during plant development. Contributes to vascular bundle formation and secondary growth in a cytokinin-dependent manner, probably by promoting the maintenance of mitotic activity and/or identity of procambial cells. Plays a role in the cytokinin-mediated repression of the iron uptake pathway. Required by the cytokinin-dependent flower development regulation pathway. The chain is Histidine kinase 3 (AHK3) from Arabidopsis thaliana (Mouse-ear cress).